Reading from the N-terminus, the 224-residue chain is Orotate phosphoribosyltransferase (224 aa).

Lys-29 serves as a coordination point for 5-phospho-alpha-D-ribose 1-diphosphate. 37–38 (FF) is a binding site for orotate. 5-phospho-alpha-D-ribose 1-diphosphate contacts are provided by residues 75–76 (YK), Arg-105, Lys-106, Lys-109, His-111, and 130–138 (DDVITAGTS). Orotate is bound by residues Thr-134 and Arg-162.

Belongs to the purine/pyrimidine phosphoribosyltransferase family. PyrE subfamily. As to quaternary structure, homodimer. The cofactor is Mg(2+).

It carries out the reaction orotidine 5'-phosphate + diphosphate = orotate + 5-phospho-alpha-D-ribose 1-diphosphate. The protein operates within pyrimidine metabolism; UMP biosynthesis via de novo pathway; UMP from orotate: step 1/2. In terms of biological role, catalyzes the transfer of a ribosyl phosphate group from 5-phosphoribose 1-diphosphate to orotate, leading to the formation of orotidine monophosphate (OMP). This chain is Orotate phosphoribosyltransferase, found in Bordetella pertussis (strain Tohama I / ATCC BAA-589 / NCTC 13251).